Here is a 637-residue protein sequence, read N- to C-terminus: Chaperone protein HtpG (637 aa).

Positions 1–345 (MSQQETHGFQ…SNDLPLNVSR (345 aa)) are a; substrate-binding. Residues 346 to 562 (EILQDNHITK…EGEMSSQMIK (217 aa)) form a b region. The segment at 563 to 637 (LMQAAGQPVP…MNQMLLANLK (75 aa)) is c.

The protein belongs to the heat shock protein 90 family. Homodimer.

The protein resides in the cytoplasm. Molecular chaperone. Has ATPase activity. This is Chaperone protein HtpG from Shewanella sp. (strain MR-7).